A 723-amino-acid chain; its full sequence is Pentatricopeptide repeat-containing protein At5g50280, chloroplastic (723 aa).

A chloroplast-targeting transit peptide spans 1–44 (MSMASSSLATQSFFSSFPLSHRLHFPVPYLLLRSSFFRKPLSLS). Positions 70–97 (IQQPENSTINSEESECEEEDDEEGDDFT) are disordered. The span at 81 to 97 (EESECEEEDDEEGDDFT) shows a compositional bias: acidic residues. 11 PPR repeats span residues 272–306 (DVRL…NVYP), 307–342 (DNVT…GVKW), 343–377 (SQDV…GIRS), 378–412 (NTIV…GLKP), 413–447 (SAAT…GLEP), 448–483 (NVKS…GLKP), 484–518 (SSHS…GIKP), 519–553 (SVET…KIKG), 554–588 (TRIT…GLQP), 589–623 (SVMT…NLKP), and 624–658 (DSIT…GQVP). The tract at residues 700–723 (TKGKKDEFWKYKTNRTTSPGRHRS) is disordered. Residues 713–723 (NRTTSPGRHRS) are compositionally biased toward polar residues.

This sequence belongs to the PPR family. P subfamily.

It localises to the plastid. The protein localises to the chloroplast. This chain is Pentatricopeptide repeat-containing protein At5g50280, chloroplastic (EMB1006), found in Arabidopsis thaliana (Mouse-ear cress).